We begin with the raw amino-acid sequence, 145 residues long: uncharacterized protein (145 aa).

The interval 95–119 (YVDSTSRTPSAKKDMQGLSVSEKQT) is disordered.

This is an uncharacterized protein from Treponema pallidum (strain Nichols).